We begin with the raw amino-acid sequence, 1408 residues long: ARF guanine-nucleotide exchange factor 1 (1408 aa).

S49 bears the Phosphoserine mark. A disordered region spans residues 262 to 287; it reads TTTSDNDLSSTDDDSAVADDNKNEKP. Residues 552–706 form the SEC7 domain; the sequence is FNEKAKKGIQ…IIMLNTDSHN (155 aa).

Interacts (via N-terminal region) with SEC21 (via C-terminus). Interacts with GMH1. Interacts with DRS2.

Its subcellular location is the cytoplasm. It is found in the cytosol. It localises to the membrane. The protein resides in the endoplasmic reticulum. The protein localises to the mitochondrion. In terms of biological role, activates the ARF proteins by exchanging bound GDP for free GTP. Plays a role in maintaining mitochondrial morphology, and in the turnover of mitochondria through mitophagy. The sequence is that of ARF guanine-nucleotide exchange factor 1 (GEA1) from Saccharomyces cerevisiae (strain ATCC 204508 / S288c) (Baker's yeast).